A 162-amino-acid chain; its full sequence is SCF ubiquitin ligase complex protein SKP1a (162 aa).

S2 carries the post-translational modification N-acetylserine. Positions 100–162 (ILAANYLDIK…NEWCEDKGGN (63 aa)) are interaction with the F-box domain of F-box proteins. P143 is modified (4-hydroxyproline). P143 is a glycosylation site (O-linked (GlcNAc...) hydroxyproline).

It belongs to the SKP1 family. Multiprotein complex (SCF) with cullin and F-box-containing protein. Capable of undergoing aggregation. Post-translationally, O-linked glycan consists of linear Gal-Gal-Fuc-Gal-GlcNAc. In terms of processing, fpaA and fpaB seem to be identically glycosylated. Glycosylation is required for nuclear enrichment. Hydroxylated by phyA.

It is found in the cytoplasm. The protein resides in the nucleus. The protein is SCF ubiquitin ligase complex protein SKP1a (fpaA) of Dictyostelium discoideum (Social amoeba).